The chain runs to 642 residues: MPIITLPDGSQRQFDNPVSTMEVAQSIGPGLAKATIAGRVNGNRVDACDLIEEDASLEIITVKDEVDGLEIVRHSCAHLLGHALKQLYPQAKMAIGPTIDNGFYYDIDLDESLTQEDLEKIEKRMKELAKTKYEVVKKKVSWQEARDTFESRGEPYKVEILDENVSRDDRPGLYHHEEYIDMCRGPHVPNMGFCQHFTLLNVAGAYWRGNSDNKMLQRIYGTAFHDKKALKAHLTRLEEAAKRDHRKIGKQLDLFHMQQEAPGMVFWHHNGWSIFRDLEVFVRDKLNEYDYQEVKGPLMMDRVLWERSGHWDKYADAMFTTSSENREYAIKPMNCPGHVQIFNQGLKSYRDLPLRMAEFGSCHRNEPSGALHGIMRVRGFTQDDAHIFCTESQIQEEVTSCIKMVYDTYQTFGFDNIVVKLSTRPEKRVGSDEIWDQSEEALKQSLESMEIPYEIQEGEGAFYGPKIEFTLYDCLDRAWQCGTVQLDFNLPGRLGATYVGENNERLVPVMIHRAILGSLERFIGILIEEYAGFFPTWLAPEQAVLMNITDKQSGYVQEIVQKLQKSGIRAKADLRNEKIGFKIREHTLKRVPYMLVVGDQEMEAGEIAVRTRKGKDLGKFKVDDFIAYIQDEISSRKLNLEE.

One can recognise a TGS domain in the interval 1 to 61 (MPIITLPDGS…EEDASLEIIT (61 aa)). A catalytic region spans residues 244–535 (DHRKIGKQLD…LIEEYAGFFP (292 aa)). Cys-335, His-386, and His-512 together coordinate Zn(2+).

It belongs to the class-II aminoacyl-tRNA synthetase family. As to quaternary structure, homodimer. Zn(2+) serves as cofactor.

Its subcellular location is the cytoplasm. The catalysed reaction is tRNA(Thr) + L-threonine + ATP = L-threonyl-tRNA(Thr) + AMP + diphosphate + H(+). Catalyzes the attachment of threonine to tRNA(Thr) in a two-step reaction: L-threonine is first activated by ATP to form Thr-AMP and then transferred to the acceptor end of tRNA(Thr). Also edits incorrectly charged L-seryl-tRNA(Thr). In Vibrio parahaemolyticus serotype O3:K6 (strain RIMD 2210633), this protein is Threonine--tRNA ligase.